A 782-amino-acid chain; its full sequence is E3 UFM1-protein ligase 1 homolog (782 aa).

The disordered stretch occupies residues 405 to 478 (VSTQELEDDG…TRGGGGASKK (74 aa)).

It belongs to the UFL1 family.

In terms of biological role, E3 UFM1-protein ligase that mediates ufmylation of target proteins. This is E3 UFM1-protein ligase 1 homolog from Drosophila sechellia (Fruit fly).